The chain runs to 443 residues: MTDPLNPTRLQNHPALARIIESGRTNLPTGITTSGALSAYAQNAAAIIRDNREREKVEIADLNNRLARYVEKVRFLEAQNRVLENDIGVFRNAAHTHSERIAVYFESEKASLFTLVRENKAKISTAEQNIRKLEPDVISAKKNLESSFQLRVQTREDKRSQMKILSNLEAENSYIKRLTTDCEEEKSRVHSEISRLRSDIKRVHALRDKERSKHSSSSQELLKRLNGCISQHDIAIREEISKARRDTTNKNRDYFHNELHAAMKEIRDRFEKDSRAARKTWEDWYHKKITEIKKGSESYSSIQNQAREEILRIRSIVNEFRGKLSDSETINQQLIKRIDDLHFQDKENLRLFEIALNEKENLVIKMREECTKLSVELDKLVENQINLRNEINHYRKLMENAEHLRTTVQTHVTYNAPPPPLPQSGPRTTSYHAYGSAYNDSLL.

The tract at residues 1–58 (MTDPLNPTRLQNHPALARIIESGRTNLPTGITTSGALSAYAQNAAAIIRDNREREKVE) is head. The IF rod domain occupies 55 to 405 (EKVEIADLNN…KLMENAEHLR (351 aa)). Positions 59-90 (IADLNNRLARYVEKVRFLEAQNRVLENDIGVF) are coil 1A. The tract at residues 91–104 (RNAAHTHSERIAVY) is linker 1. The tract at residues 105–239 (FESEKASLFT…SQHDIAIREE (135 aa)) is coil 1B. A linker 12 region spans residues 240–257 (ISKARRDTTNKNRDYFHN). Residues 258–403 (ELHAAMKEIR…YRKLMENAEH (146 aa)) form a coil 2 region. The tail stretch occupies residues 404-443 (LRTTVQTHVTYNAPPPPLPQSGPRTTSYHAYGSAYNDSLL).

The protein belongs to the intermediate filament family.

It localises to the cytoplasm. Cytoplasmic intermediate filaments provide mechanical strength to cells. Not essential protein. The polypeptide is Intermediate filament protein ifd-2 (ifd-2) (Caenorhabditis elegans).